A 338-amino-acid chain; its full sequence is 3 beta-hydroxysteroid dehydrogenase type 7 (338 aa).

The Proton acceptor role is filled by tyrosine 159. Lysine 163 contributes to the NAD(+) binding site. Helical transmembrane passes span 258–278 (LLPY…QWLL) and 280–300 (PLVL…NTTF).

Belongs to the 3-beta-HSD family. As to expression, high levels in liver and lung, moderate levels in spleen, brain, heart, kidney, jejunum and testis. Up-regulated in 3Y1 cells upon growth arrest.

Its subcellular location is the endoplasmic reticulum membrane. The enzyme catalyses 7alpha-hydroxycholesterol + NAD(+) = 7alpha-hydroxycholest-4-en-3-one + NADH + H(+). It carries out the reaction 7alpha,25-dihydroxycholesterol + NAD(+) = 7alpha,25-dihydroxy-4-cholesten-3-one + NADH + H(+). It catalyses the reaction (25R)-cholest-5-en-3beta,7alpha,26-triol + NAD(+) = (25R)-7alpha,26-dihydroxycholest-4-en-3-one + NADH + H(+). The catalysed reaction is (24S)-7alpha-dihydroxycholesterol + NAD(+) = (24S)-7alpha,24-dihydroxycholest-4-en-3-one + NADH + H(+). It functions in the pathway lipid metabolism; steroid biosynthesis. Its function is as follows. The 3-beta-HSD enzymatic system plays a crucial role in the biosynthesis of all classes of hormonal steroids. HSD VII is active against four 7-alpha-hydroxylated sterols. Does not metabolize several different C(19/21) steroids as substrates. Involved in bile acid synthesis. Plays a key role in cell positioning and movement in lymphoid tissues by mediating degradation of 7-alpha,25-dihydroxycholesterol (7-alpha,25-OHC): 7-alpha,25-OHC acts as a ligand for the G protein-coupled receptor GPR183/EBI2, a chemotactic receptor for a number of lymphoid cells. The protein is 3 beta-hydroxysteroid dehydrogenase type 7 of Rattus norvegicus (Rat).